A 146-amino-acid chain; its full sequence is Globin-2B (146 aa).

The Globin domain occupies 9-146 (QLTADVKKDL…KLVGVVQAAL (138 aa)). His101 provides a ligand contact to heme b.

The protein belongs to the globin family. As to quaternary structure, homodimer.

The chain is Globin-2B from Anadara trapezia (Sydney cockle).